The sequence spans 529 residues: Bifunctional purine biosynthesis protein PurH (529 aa).

The region spanning 1 to 148 (MQQRRPVRRA…KNHKDVAIVV (148 aa)) is the MGS-like domain.

This sequence belongs to the PurH family.

The catalysed reaction is (6R)-10-formyltetrahydrofolate + 5-amino-1-(5-phospho-beta-D-ribosyl)imidazole-4-carboxamide = 5-formamido-1-(5-phospho-D-ribosyl)imidazole-4-carboxamide + (6S)-5,6,7,8-tetrahydrofolate. It catalyses the reaction IMP + H2O = 5-formamido-1-(5-phospho-D-ribosyl)imidazole-4-carboxamide. The protein operates within purine metabolism; IMP biosynthesis via de novo pathway; 5-formamido-1-(5-phospho-D-ribosyl)imidazole-4-carboxamide from 5-amino-1-(5-phospho-D-ribosyl)imidazole-4-carboxamide (10-formyl THF route): step 1/1. It participates in purine metabolism; IMP biosynthesis via de novo pathway; IMP from 5-formamido-1-(5-phospho-D-ribosyl)imidazole-4-carboxamide: step 1/1. This chain is Bifunctional purine biosynthesis protein PurH, found in Salmonella heidelberg (strain SL476).